A 233-amino-acid polypeptide reads, in one-letter code: Large ribosomal subunit protein uL1 (233 aa).

This sequence belongs to the universal ribosomal protein uL1 family. In terms of assembly, part of the 50S ribosomal subunit.

Binds directly to 23S rRNA. The L1 stalk is quite mobile in the ribosome, and is involved in E site tRNA release. In terms of biological role, protein L1 is also a translational repressor protein, it controls the translation of the L11 operon by binding to its mRNA. The protein is Large ribosomal subunit protein uL1 of Vibrio campbellii (strain ATCC BAA-1116).